The chain runs to 218 residues: Ribose-5-phosphate isomerase A (218 aa).

Substrate is bound by residues 28–31 (SGST), 81–84 (DGAD), and 94–97 (KGKG). Glu103 acts as the Proton acceptor in catalysis. Lys121 contributes to the substrate binding site.

It belongs to the ribose 5-phosphate isomerase family. In terms of assembly, homodimer.

The enzyme catalyses aldehydo-D-ribose 5-phosphate = D-ribulose 5-phosphate. It functions in the pathway carbohydrate degradation; pentose phosphate pathway; D-ribose 5-phosphate from D-ribulose 5-phosphate (non-oxidative stage): step 1/1. In terms of biological role, catalyzes the reversible conversion of ribose-5-phosphate to ribulose 5-phosphate. The protein is Ribose-5-phosphate isomerase A of Wigglesworthia glossinidia brevipalpis.